The following is a 226-amino-acid chain: uncharacterized protein (226 aa).

Belongs to the mimivirus L246/L426 family.

This is an uncharacterized protein from Acanthamoeba polyphaga mimivirus (APMV).